The following is a 103-amino-acid chain: Large ribosomal subunit protein P2 (103 aa).

Residues 64-103 are disordered; sequence LAISSSQKSEPAQPADTAESTQATENKEEEDEDFDIFAAF. A compositionally biased stretch (acidic residues) spans 90-103; the sequence is KEEEDEDFDIFAAF.

This sequence belongs to the eukaryotic ribosomal protein P1/P2 family. In terms of assembly, component of the large ribosomal subunit.

The protein localises to the cytoplasm. Plays an important role in the elongation step of protein synthesis. The protein is Large ribosomal subunit protein P2 (RPP2A) of Encephalitozoon cuniculi (strain GB-M1) (Microsporidian parasite).